The chain runs to 250 residues: Small ribosomal subunit protein uS3z (250 aa).

A KH type-2 domain is found at 21 to 92; sequence LNEVLTRELA…SVELYAEKVN (72 aa).

This sequence belongs to the universal ribosomal protein uS3 family. As to quaternary structure, interacts with SNRNP35.

The polypeptide is Small ribosomal subunit protein uS3z (RPS3A) (Arabidopsis thaliana (Mouse-ear cress)).